Consider the following 355-residue polypeptide: MSGQGKRLMVMAGGTGGHVFPGLAVAHHLMAQGWQVRWLGTADRMEADLVPKHGIEIDFIRISGLRGKGIKALIAAPLRIFNAWRQARAIMKAYKPDVVLGMGGYVSGPGGLAAWSLGIPVVLHEQNGIAGLTNKWLAKIATKVMQAFPGAFPNAEVVGNPVRTDVLALPLPQQRLAGREGPVRVLVVGGSQGARILNQTMPQVAAKLGDSVTIWHQSGKGSQQSVEQAYAEAGQPQHKVTEFIDDMAAAYAWADVVVCRSGALTVSEIAAAGLPALFVPFQHKDRQQYWNALPLEKAGAAKIIEQSQLSVDAVANTLAGWSRETLLTMAERARAASIPDATERVANEVSRAARA.

UDP-N-acetyl-alpha-D-glucosamine contacts are provided by residues 15-17 (TGG), N127, R163, S191, I244, 263-268 (ALTVSE), and Q288.

Belongs to the glycosyltransferase 28 family. MurG subfamily.

It localises to the cell inner membrane. It carries out the reaction di-trans,octa-cis-undecaprenyl diphospho-N-acetyl-alpha-D-muramoyl-L-alanyl-D-glutamyl-meso-2,6-diaminopimeloyl-D-alanyl-D-alanine + UDP-N-acetyl-alpha-D-glucosamine = di-trans,octa-cis-undecaprenyl diphospho-[N-acetyl-alpha-D-glucosaminyl-(1-&gt;4)]-N-acetyl-alpha-D-muramoyl-L-alanyl-D-glutamyl-meso-2,6-diaminopimeloyl-D-alanyl-D-alanine + UDP + H(+). Its pathway is cell wall biogenesis; peptidoglycan biosynthesis. Functionally, cell wall formation. Catalyzes the transfer of a GlcNAc subunit on undecaprenyl-pyrophosphoryl-MurNAc-pentapeptide (lipid intermediate I) to form undecaprenyl-pyrophosphoryl-MurNAc-(pentapeptide)GlcNAc (lipid intermediate II). This is UDP-N-acetylglucosamine--N-acetylmuramyl-(pentapeptide) pyrophosphoryl-undecaprenol N-acetylglucosamine transferase from Escherichia coli O127:H6 (strain E2348/69 / EPEC).